A 668-amino-acid chain; its full sequence is Exoribonuclease 2 (668 aa).

Residues 193 to 521 form the RNB domain; sequence RIEMTHVPFV…INHRMLKAVI (329 aa). The S1 motif domain maps to 568-650; it reads QTCFTGEIFD…ENRSLVAKPT (83 aa).

It belongs to the RNR ribonuclease family. RNase II subfamily.

The protein resides in the cytoplasm. The catalysed reaction is Exonucleolytic cleavage in the 3'- to 5'-direction to yield nucleoside 5'-phosphates.. Involved in mRNA degradation. Hydrolyzes single-stranded polyribonucleotides processively in the 3' to 5' direction. This Vibrio parahaemolyticus serotype O3:K6 (strain RIMD 2210633) protein is Exoribonuclease 2.